Consider the following 847-residue polypeptide: MRVKGIRKNYQHLWRGGTLLLGMLMICSAVEKLWVTVYYGVPVWKEATTTLFCASDAKAYDTEVHNVWATHACVPTDPNPQEIVLENVTENFNMWKNNMVEQMHEDIISLWDQSLKPCVKLTPLCVTLHCTNLKNATNTKSSNWKEMDRGEIKNCSFKVTTSIRNKMQKEYALFYKLDVVPIDNDNTSYKLINCNTSVITQACPKVSFEPIPIHYCAPAGFAILKCNDKKFNGSGPCTNVSTVQCTHGIRPVVSTQLLLNGSLAEEGVVIRSENFTDNAKTIIVQLKESVEINCTRPNNNTRKSITIGPGRAFYATGDIIGDIRQAHCNISGEKWNNTLKQIVTKLQAQFGNKTIVFKQSSGGDPEIVMHSFNCGGEFFYCNSTQLFNSTWNNTIGPNNTNGTITLPCRIKQIINRWQEVGKAMYAPPIRGQIRCSSNITGLLLTRDGGKEISNTTEIFRPGGGDMRDNWRSELYKYKVVKIEPLGVAPTKAKRRVVQREKRAVTLGAMFLGFLGAAGSTMGARSLTLTVQARQLLSGIVQQQNNLLRAIEAQQHLLQLTVWGIKQLQARVLAVERYLKDQQLLGIWGCSGKLICTTAVPWNASWSNKSLDQIWNNMTWMEWEREIDNYTNLIYTLIEESQNQQEKNEQELLELDKWASLWNWFDISKWLWYIKIFIMIVGGLVGLRIVFTVLSIVNRVRQGYSPLSFQTRFPAPRGPDRPEGIEEEGGERDRDRSSPLVHGLLALIWDDLRSLCLFSYHRLRDLILIAARIVELLGRRGWEALKYWGNLLQYWIQELKNSAVSLFDAIAIAVAEGTDRIIEVAQRIGRAFLHIPRRIRQGFERALL.

Positions 1–31 are cleaved as a signal peptide; the sequence is MRVKGIRKNYQHLWRGGTLLLGMLMICSAVE. Topologically, residues 32–675 are extracellular; sequence KLWVTVYYGV…ISKWLWYIKI (644 aa). Cysteine 53 and cysteine 73 are disulfide-bonded. N-linked (GlcNAc...) asparagine; by host glycosylation is found at asparagine 87, asparagine 135, asparagine 154, asparagine 186, asparagine 195, asparagine 232, asparagine 239, asparagine 260, asparagine 274, asparagine 293, asparagine 299, asparagine 329, asparagine 336, and asparagine 352. 5 disulfides stabilise this stretch: cysteine 118–cysteine 203, cysteine 125–cysteine 194, cysteine 130–cysteine 155, cysteine 216–cysteine 245, and cysteine 226–cysteine 237. A V1 region spans residues 130–154; the sequence is CTNLKNATNTKSSNWKEMDRGEIKN. Positions 155 to 194 are V2; sequence CSFKVTTSIRNKMQKEYALFYKLDVVPIDNDNTSYKLINC. The interval 294–327 is V3; it reads CTRPNNNTRKSITIGPGRAFYATGDIIGDIRQAH. Cysteines 294 and 328 form a disulfide. Positions 360–370 are CD4-binding loop; it reads SSGGDPEIVMH. 2 disulfides stabilise this stretch: cysteine 374-cysteine 435 and cysteine 381-cysteine 408. A V4 region spans residues 381–408; sequence CNSTQLFNSTWNNTIGPNNTNGTITLPC. 7 N-linked (GlcNAc...) asparagine; by host glycosylation sites follow: asparagine 382, asparagine 388, asparagine 392, asparagine 398, asparagine 401, asparagine 438, and asparagine 454. V5 regions lie at residues 451–462 and 453–462; these read EISNTTEIFRPG and SNTTEIFRPG. Residues 503–523 are fusion peptide; the sequence is AVTLGAMFLGFLGAAGSTMGA. Residues 565-583 form an immunosuppression region; that stretch reads KQLQARVLAVERYLKDQQL. A disulfide bond links cysteine 589 and cysteine 595. Residues asparagine 602, asparagine 607, asparagine 616, and asparagine 628 are each glycosylated (N-linked (GlcNAc...) asparagine; by host). A coiled-coil region spans residues 624–658; that stretch reads REIDNYTNLIYTLIEESQNQQEKNEQELLELDKWA. Residues 653–674 are MPER; binding to GalCer; it reads ELDKWASLWNWFDISKWLWYIK. A helical membrane pass occupies residues 676 to 696; that stretch reads FIMIVGGLVGLRIVFTVLSIV. Topologically, residues 697–847 are cytoplasmic; the sequence is NRVRQGYSPL…IRQGFERALL (151 aa). The YXXL motif; contains endocytosis signal motif lies at 703 to 706; that stretch reads YSPL. The tract at residues 710-736 is disordered; the sequence is TRFPAPRGPDRPEGIEEEGGERDRDRS. The S-palmitoyl cysteine; by host moiety is linked to residue cysteine 755. The short motif at 846–847 is the Di-leucine internalization motif element; it reads LL.

It belongs to the HIV-1 env protein family. In terms of assembly, the mature envelope protein (Env) consists of a homotrimer of non-covalently associated gp120-gp41 heterodimers. The resulting complex protrudes from the virus surface as a spike. There seems to be as few as 10 spikes on the average virion. Interacts with host CD4, CCR5 and CXCR4. Gp120 also interacts with the C-type lectins CD209/DC-SIGN and CLEC4M/DC-SIGNR (collectively referred to as DC-SIGN(R)). Gp120 and gp41 interact with GalCer. Gp120 interacts with host ITGA4/ITGB7 complex; on CD4+ T-cells, this interaction results in rapid activation of integrin ITGAL/LFA-1, which facilitates efficient cell-to-cell spreading of HIV-1. Gp120 interacts with cell-associated heparan sulfate; this interaction increases virus infectivity on permissive cells and may be involved in infection of CD4- cells. As to quaternary structure, the mature envelope protein (Env) consists of a homotrimer of non-covalently associated gp120-gp41 heterodimers. The resulting complex protrudes from the virus surface as a spike. There seems to be as few as 10 spikes on the average virion. Highly glycosylated by host. The high number of glycan on the protein is reffered to as 'glycan shield' because it contributes to hide protein sequence from adaptive immune system. Post-translationally, palmitoylation of the transmembrane protein and of Env polyprotein (prior to its proteolytic cleavage) is essential for their association with host cell membrane lipid rafts. Palmitoylation is therefore required for envelope trafficking to classical lipid rafts, but not for viral replication. In terms of processing, specific enzymatic cleavages in vivo yield mature proteins. Envelope glycoproteins are synthesized as an inactive precursor that is heavily N-glycosylated and processed likely by host cell furin in the Golgi to yield the mature SU and TM proteins. The cleavage site between SU and TM requires the minimal sequence [KR]-X-[KR]-R. About 2 of the 9 disulfide bonds of gp41 are reduced by P4HB/PDI, following binding to CD4 receptor.

It is found in the virion membrane. Its subcellular location is the host cell membrane. It localises to the host endosome membrane. In terms of biological role, oligomerizes in the host endoplasmic reticulum into predominantly trimers. In a second time, gp160 transits in the host Golgi, where glycosylation is completed. The precursor is then proteolytically cleaved in the trans-Golgi and thereby activated by cellular furin or furin-like proteases to produce gp120 and gp41. Attaches the virus to the host lymphoid cell by binding to the primary receptor CD4. This interaction induces a structural rearrangement creating a high affinity binding site for a chemokine coreceptor like CXCR4 and/or CCR5. Acts as a ligand for CD209/DC-SIGN and CLEC4M/DC-SIGNR, which are respectively found on dendritic cells (DCs), and on endothelial cells of liver sinusoids and lymph node sinuses. These interactions allow capture of viral particles at mucosal surfaces by these cells and subsequent transmission to permissive cells. HIV subverts the migration properties of dendritic cells to gain access to CD4+ T-cells in lymph nodes. Virus transmission to permissive T-cells occurs either in trans (without DCs infection, through viral capture and transmission), or in cis (following DCs productive infection, through the usual CD4-gp120 interaction), thereby inducing a robust infection. In trans infection, bound virions remain infectious over days and it is proposed that they are not degraded, but protected in non-lysosomal acidic organelles within the DCs close to the cell membrane thus contributing to the viral infectious potential during DCs' migration from the periphery to the lymphoid tissues. On arrival at lymphoid tissues, intact virions recycle back to DCs' cell surface allowing virus transmission to CD4+ T-cells. Its function is as follows. Acts as a class I viral fusion protein. Under the current model, the protein has at least 3 conformational states: pre-fusion native state, pre-hairpin intermediate state, and post-fusion hairpin state. During fusion of viral and target intracellular membranes, the coiled coil regions (heptad repeats) assume a trimer-of-hairpins structure, positioning the fusion peptide in close proximity to the C-terminal region of the ectodomain. The formation of this structure appears to drive apposition and subsequent fusion of viral and target cell membranes. Complete fusion occurs in host cell endosomes and is dynamin-dependent, however some lipid transfer might occur at the plasma membrane. The virus undergoes clathrin-dependent internalization long before endosomal fusion, thus minimizing the surface exposure of conserved viral epitopes during fusion and reducing the efficacy of inhibitors targeting these epitopes. Membranes fusion leads to delivery of the nucleocapsid into the cytoplasm. This Human immunodeficiency virus type 1 group M subtype B (isolate SF162) (HIV-1) protein is Envelope glycoprotein gp160.